A 96-amino-acid chain; its full sequence is Small ribosomal subunit protein bS20 (96 aa).

A disordered region spans residues 1-27 (MAKQEVAAKKVKRPTALKRDLQNKKKR).

It belongs to the bacterial ribosomal protein bS20 family.

In terms of biological role, binds directly to 16S ribosomal RNA. The sequence is that of Small ribosomal subunit protein bS20 from Protochlamydia amoebophila (strain UWE25).